We begin with the raw amino-acid sequence, 346 residues long: Methylthioribose-1-phosphate isomerase (346 aa).

Substrate-binding positions include 48–50, Arg91, and Gln196; that span reads RGA. Asp237 (proton donor) is an active-site residue. A substrate-binding site is contributed by 247-248; sequence NK.

The protein belongs to the eIF-2B alpha/beta/delta subunits family. MtnA subfamily.

It catalyses the reaction 5-(methylsulfanyl)-alpha-D-ribose 1-phosphate = 5-(methylsulfanyl)-D-ribulose 1-phosphate. It participates in amino-acid biosynthesis; L-methionine biosynthesis via salvage pathway; L-methionine from S-methyl-5-thio-alpha-D-ribose 1-phosphate: step 1/6. Catalyzes the interconversion of methylthioribose-1-phosphate (MTR-1-P) into methylthioribulose-1-phosphate (MTRu-1-P). This Thermosipho africanus (strain TCF52B) protein is Methylthioribose-1-phosphate isomerase.